Consider the following 910-residue polypeptide: Protein translocase subunit SecA (910 aa).

ATP contacts are provided by residues Gln87, 105 to 109 (GEGKT), and Asp501. Zn(2+) is bound by residues Cys894, Cys896, Cys905, and His906.

Belongs to the SecA family. Monomer and homodimer. Part of the essential Sec protein translocation apparatus which comprises SecA, SecYEG and auxiliary proteins SecDF-YajC and YidC. Requires Zn(2+) as cofactor.

It localises to the cell inner membrane. The protein localises to the cytoplasm. The catalysed reaction is ATP + H2O + cellular proteinSide 1 = ADP + phosphate + cellular proteinSide 2.. In terms of biological role, part of the Sec protein translocase complex. Interacts with the SecYEG preprotein conducting channel. Has a central role in coupling the hydrolysis of ATP to the transfer of proteins into and across the cell membrane, serving both as a receptor for the preprotein-SecB complex and as an ATP-driven molecular motor driving the stepwise translocation of polypeptide chains across the membrane. This Acidiphilium cryptum (strain JF-5) protein is Protein translocase subunit SecA.